The chain runs to 324 residues: Beta-ketoacyl-[acyl-carrier-protein] synthase III (324 aa).

Active-site residues include cysteine 111 and histidine 251. Residues 252 to 256 form an ACP-binding region; that stretch reads QANTR. Asparagine 281 is an active-site residue.

The protein belongs to the thiolase-like superfamily. FabH family. In terms of assembly, homodimer.

It localises to the plastid. Its subcellular location is the chloroplast. It catalyses the reaction malonyl-[ACP] + acetyl-CoA + H(+) = 3-oxobutanoyl-[ACP] + CO2 + CoA. The protein operates within lipid metabolism; fatty acid biosynthesis. Its function is as follows. Catalyzes the condensation reaction of fatty acid synthesis by the addition to an acyl acceptor of two carbons from malonyl-ACP. Catalyzes the first condensation reaction which initiates fatty acid synthesis and may therefore play a role in governing the total rate of fatty acid production. Possesses both acetoacetyl-ACP synthase and acetyl transacylase activities. Its substrate specificity determines the biosynthesis of branched-chain and/or straight-chain of fatty acids. This Pyropia yezoensis (Susabi-nori) protein is Beta-ketoacyl-[acyl-carrier-protein] synthase III.